A 120-amino-acid polypeptide reads, in one-letter code: uncharacterized protein (120 aa).

The next 2 membrane-spanning stretches (helical) occupy residues 8 to 28 (PFVTGVLLPSAVFSFLFCTLV) and 55 to 75 (FLENTLIFLGSGNLTAHIGIL).

The protein localises to the membrane. This is an uncharacterized protein from Saccharomyces cerevisiae (strain ATCC 204508 / S288c) (Baker's yeast).